An 835-amino-acid polypeptide reads, in one-letter code: Protein translocase subunit SecA (835 aa).

ATP contacts are provided by residues Q85, 103 to 107 (GEGKT), and D492. Residues 788-807 (VQGEAVHPSSDGEEAKKKPV) are disordered. Zn(2+) contacts are provided by C819, C821, C830, and C831.

It belongs to the SecA family. Monomer and homodimer. Part of the essential Sec protein translocation apparatus which comprises SecA, SecYEG and auxiliary proteins SecDF. Other proteins may also be involved. Zn(2+) serves as cofactor.

It is found in the cell membrane. The protein localises to the cytoplasm. It carries out the reaction ATP + H2O + cellular proteinSide 1 = ADP + phosphate + cellular proteinSide 2.. Functionally, part of the Sec protein translocase complex. Interacts with the SecYEG preprotein conducting channel. Has a central role in coupling the hydrolysis of ATP to the transfer of proteins into and across the cell membrane, serving as an ATP-driven molecular motor driving the stepwise translocation of polypeptide chains across the membrane. This chain is Protein translocase subunit SecA, found in Bacillus cereus (strain ATCC 10987 / NRS 248).